A 223-amino-acid polypeptide reads, in one-letter code: 2-C-methyl-D-erythritol 4-phosphate cytidylyltransferase (223 aa).

This sequence belongs to the IspD/TarI cytidylyltransferase family. IspD subfamily.

The enzyme catalyses 2-C-methyl-D-erythritol 4-phosphate + CTP + H(+) = 4-CDP-2-C-methyl-D-erythritol + diphosphate. The protein operates within isoprenoid biosynthesis; isopentenyl diphosphate biosynthesis via DXP pathway; isopentenyl diphosphate from 1-deoxy-D-xylulose 5-phosphate: step 2/6. Its function is as follows. Catalyzes the formation of 4-diphosphocytidyl-2-C-methyl-D-erythritol from CTP and 2-C-methyl-D-erythritol 4-phosphate (MEP). This chain is 2-C-methyl-D-erythritol 4-phosphate cytidylyltransferase, found in Prochlorococcus marinus subsp. pastoris (strain CCMP1986 / NIES-2087 / MED4).